An 85-amino-acid chain; its full sequence is Antitoxin VapB43 (85 aa).

Positions 37-60 (GLNPPKPQAAGRYRVQPSGKGGLR) are disordered.

Its function is as follows. Antitoxin component of a type II toxin-antitoxin (TA) system. This Mycobacterium tuberculosis (strain CDC 1551 / Oshkosh) protein is Antitoxin VapB43 (vapB43).